The following is a 190-amino-acid chain: dCTP deaminase (190 aa).

A dCTP-binding site is contributed by 107 to 112; that stretch reads KSTYAR. Glutamate 133 serves as the catalytic Proton donor/acceptor. The dCTP site is built by glutamine 152, tyrosine 166, and glutamine 176.

Belongs to the dCTP deaminase family. As to quaternary structure, homotrimer.

The catalysed reaction is dCTP + H2O + H(+) = dUTP + NH4(+). It functions in the pathway pyrimidine metabolism; dUMP biosynthesis; dUMP from dCTP (dUTP route): step 1/2. In terms of biological role, catalyzes the deamination of dCTP to dUTP. In Campylobacter hominis (strain ATCC BAA-381 / DSM 21671 / CCUG 45161 / LMG 19568 / NCTC 13146 / CH001A), this protein is dCTP deaminase.